The chain runs to 364 residues: D-alanine--D-alanine ligase A (364 aa).

One can recognise an ATP-grasp domain in the interval 145–348 (KRLLRDAGLN…YTDLITRLIE (204 aa)). 175-230 (ESKLGLPLFVKPANQGSSVGVSKVTSEEQYTIAVDLAFEFDHKVIVEQGIKGREIE) contributes to the ATP binding site. Asp302, Glu315, and Asn317 together coordinate Mg(2+).

This sequence belongs to the D-alanine--D-alanine ligase family. Mg(2+) is required as a cofactor. Requires Mn(2+) as cofactor.

The protein localises to the cytoplasm. It catalyses the reaction 2 D-alanine + ATP = D-alanyl-D-alanine + ADP + phosphate + H(+). It participates in cell wall biogenesis; peptidoglycan biosynthesis. Its function is as follows. Cell wall formation. In Escherichia coli O6:H1 (strain CFT073 / ATCC 700928 / UPEC), this protein is D-alanine--D-alanine ligase A.